The following is a 423-amino-acid chain: Glycine amidinotransferase, mitochondrial (423 aa).

A mitochondrion-targeting transit peptide spans 1-43 (MLRVRCLRGGSRGAEAVHYIGSRLGGSLTGWVQRTFQSTQAAT). Phosphoserine is present on residues Ser46 and Ser49. Position 170 (Asp170) interacts with arginine. Residues Asp254 and His303 contribute to the active site. Asp305, Arg322, Ser354, and Ser355 together coordinate arginine. Lys385 carries the post-translational modification N6-acetyllysine. The Amidino-cysteine intermediate role is filled by Cys407.

This sequence belongs to the amidinotransferase family. Homodimer. Highly expressed in the kidney and pancreas, especially in the proximal tubules of the kidney, and alpha cells of the pancreatic islets (at protein level). Moderately expressed in liver hepatocytes (at protein level). Expressed in the kidney, pancreas, liver, colon, ileum, jejunum, heart and skeletal muscle. In reproductive tissues, expressed in the testis, epididymis, ovary, oviduct and uterus. Expressed throughout the brain in neurons, astrocytes and oligodendrocytes. In 12.5 dpc embryos, it is expressed in the middle part of the somites, hepatic primordium and wall of the dorsal aorta. Expressed in 15.5 dpc embryos in isolated cells throughout the central nervous system, skeletal muscles, gonad primordia, caudal somites, liver and pancreas, but not in the choroid plexus, root ganglia or kidney. Expressed in skeletal muscle, kidney, pancreas, central nervous system, liver and intestine epithelial cells, but not in epidermis, dermis, olfactory epithelium, trachea, lung, stomach or heart in 18.5 dpc embryos.

It localises to the mitochondrion inner membrane. It catalyses the reaction L-arginine + glycine = guanidinoacetate + L-ornithine. It carries out the reaction 4-aminobutanoate + L-arginine = 4-guanidinobutanoate + L-ornithine. The enzyme catalyses beta-alanine + L-arginine = 3-guanidinopropanoate + L-ornithine. The catalysed reaction is taurine + L-arginine = taurocyamine + L-ornithine. Its pathway is amine and polyamine biosynthesis; creatine biosynthesis; creatine from L-arginine and glycine: step 1/2. Functionally, transamidinase that catalyzes the transfer of the amidino group of L-arginine onto the amino moiety of acceptor metabolites such as glycine, beta-alanine, gamma-aminobutyric acid (GABA) and taurine yielding the corresponding guanidine derivatives. Catalyzes the rate-limiting step of creatine biosynthesis, namely the transfer of the amidino group from L-arginine to glycine to generate guanidinoacetate, which is then methylated by GAMT to form creatine. Provides creatine as a source for ATP generation in tissues with high energy demands, in particular skeletal muscle, heart and brain. The chain is Glycine amidinotransferase, mitochondrial (Gatm) from Rattus norvegicus (Rat).